The following is a 372-amino-acid chain: Cytochrome b (372 aa).

4 helical membrane passes run 25 to 45 (FGSM…FLAI), 69 to 90 (WIMQ…YIHI), 105 to 125 (WFSG…GYVL), and 170 to 190 (FFAL…IHII). 2 residues coordinate heme b: His75 and His89. Positions 174 and 188 each coordinate heme b. An a ubiquinone-binding site is contributed by His193. 4 helical membrane passes run 218–238 (YKDM…LSFM), 280–300 (LGGT…PFTH), 312–332 (LAQT…WTAT), and 339–358 (FILI…IMNP).

This sequence belongs to the cytochrome b family. As to quaternary structure, the cytochrome bc1 complex contains 3 respiratory subunits (MT-CYB, CYC1 and UQCRFS1), 2 core proteins (UQCRC1 and UQCRC2) and probably 6 low-molecular weight proteins. It depends on heme b as a cofactor.

Its subcellular location is the mitochondrion inner membrane. Component of the ubiquinol-cytochrome c reductase complex (complex III or cytochrome b-c1 complex) that is part of the mitochondrial respiratory chain. The b-c1 complex mediates electron transfer from ubiquinol to cytochrome c. Contributes to the generation of a proton gradient across the mitochondrial membrane that is then used for ATP synthesis. The sequence is that of Cytochrome b (MT-CYB) from Sinomicrurus japonicus (Coral snake).